A 342-amino-acid polypeptide reads, in one-letter code: Ferredoxin--NADP reductase (342 aa).

FAD contacts are provided by Cys17, Asp36, Gln44, Tyr49, Val89, Phe124, Asp289, and Thr330.

Belongs to the ferredoxin--NADP reductase type 2 family. Homodimer. The cofactor is FAD.

It carries out the reaction 2 reduced [2Fe-2S]-[ferredoxin] + NADP(+) + H(+) = 2 oxidized [2Fe-2S]-[ferredoxin] + NADPH. This chain is Ferredoxin--NADP reductase, found in Rhodopseudomonas palustris (strain ATCC BAA-98 / CGA009).